Consider the following 280-residue polypeptide: Ribosomal RNA large subunit methyltransferase J (280 aa).

Residues H19, H42, S100, E118, 143-144 (DG), and D164 each bind S-adenosyl-L-methionine. Residue D164 is the Proton acceptor of the active site.

This sequence belongs to the RlmJ family. In terms of assembly, monomer.

It carries out the reaction adenosine(2030) in 23S rRNA + S-adenosyl-L-methionine = N(6)-methyladenosine(2030) in 23S rRNA + S-adenosyl-L-homocysteine + H(+). Specifically methylates the adenine in position 2030 of 23S rRNA. Nascent 23S rRNA seems to be the natural substrate. Appears to be not necessary for ribosome assembly. Required for the utilization of extracellular DNA as the sole source of carbon and energy. The protein is Ribosomal RNA large subunit methyltransferase J of Escherichia coli (strain K12).